Consider the following 140-residue polypeptide: Nucleoside diphosphate kinase (140 aa).

Lysine 11, phenylalanine 59, arginine 87, threonine 93, arginine 104, and asparagine 114 together coordinate ATP. Residue histidine 117 is the Pros-phosphohistidine intermediate of the active site.

Belongs to the NDK family. As to quaternary structure, homotetramer. Requires Mg(2+) as cofactor.

It is found in the cytoplasm. The enzyme catalyses a 2'-deoxyribonucleoside 5'-diphosphate + ATP = a 2'-deoxyribonucleoside 5'-triphosphate + ADP. It carries out the reaction a ribonucleoside 5'-diphosphate + ATP = a ribonucleoside 5'-triphosphate + ADP. Major role in the synthesis of nucleoside triphosphates other than ATP. The ATP gamma phosphate is transferred to the NDP beta phosphate via a ping-pong mechanism, using a phosphorylated active-site intermediate. In Xanthobacter autotrophicus (strain ATCC BAA-1158 / Py2), this protein is Nucleoside diphosphate kinase.